The primary structure comprises 754 residues: Phosphoribosylformylglycinamidine synthase subunit PurL (754 aa).

Residue His-54 is part of the active site. ATP contacts are provided by Tyr-57 and Lys-101. A Mg(2+)-binding site is contributed by Glu-103. Residues 104-107 and Arg-126 contribute to the substrate site; that span reads SHNH. His-105 serves as the catalytic Proton acceptor. Asp-127 is a binding site for Mg(2+). Residue Gln-252 coordinates substrate. Asp-280 contacts Mg(2+). 324-326 is a substrate binding site; the sequence is ESQ. The interval 386-412 is disordered; the sequence is PVYQRPVSRPESQEALNADSSKGLPRP. ATP contacts are provided by Asn-512 and Gly-549. Asn-550 serves as a coordination point for Mg(2+). Ser-552 contributes to the substrate binding site.

The protein belongs to the FGAMS family. Monomer. Part of the FGAM synthase complex composed of 1 PurL, 1 PurQ and 2 PurS subunits.

The protein localises to the cytoplasm. It catalyses the reaction N(2)-formyl-N(1)-(5-phospho-beta-D-ribosyl)glycinamide + L-glutamine + ATP + H2O = 2-formamido-N(1)-(5-O-phospho-beta-D-ribosyl)acetamidine + L-glutamate + ADP + phosphate + H(+). The protein operates within purine metabolism; IMP biosynthesis via de novo pathway; 5-amino-1-(5-phospho-D-ribosyl)imidazole from N(2)-formyl-N(1)-(5-phospho-D-ribosyl)glycinamide: step 1/2. Functionally, part of the phosphoribosylformylglycinamidine synthase complex involved in the purines biosynthetic pathway. Catalyzes the ATP-dependent conversion of formylglycinamide ribonucleotide (FGAR) and glutamine to yield formylglycinamidine ribonucleotide (FGAM) and glutamate. The FGAM synthase complex is composed of three subunits. PurQ produces an ammonia molecule by converting glutamine to glutamate. PurL transfers the ammonia molecule to FGAR to form FGAM in an ATP-dependent manner. PurS interacts with PurQ and PurL and is thought to assist in the transfer of the ammonia molecule from PurQ to PurL. The sequence is that of Phosphoribosylformylglycinamidine synthase subunit PurL from Mycobacterium leprae (strain Br4923).